The following is a 184-amino-acid chain: Dirigent protein 14 (184 aa).

Positions 1–20 (MANQIYLFSLICLSVLLCQS) are cleaved as a signal peptide. The cysteines at positions 36 and 182 are disulfide-linked. N-linked (GlcNAc...) asparagine glycosylation is found at N55 and N119.

This sequence belongs to the plant dirigent protein family. In terms of assembly, homodimer.

It localises to the secreted. It is found in the extracellular space. Its subcellular location is the apoplast. Dirigent proteins impart stereoselectivity on the phenoxy radical-coupling reaction, yielding optically active lignans from two molecules of coniferyl alcohol in the biosynthesis of lignans, flavonolignans, and alkaloids and thus plays a central role in plant secondary metabolism. This Arabidopsis thaliana (Mouse-ear cress) protein is Dirigent protein 14 (DIR14).